The chain runs to 830 residues: MADRAEMFSLSTFHSLSPPGCRPPQDISLEEFDDEDLSEITDDCGLGLSYDSDHCEKDSLSLGRSEQPHPICSFQDDFQEFEMIDDNEEEDDEEEEEEEEEEEDGDRQGKAGGGPGSQALAGDSLIPSPSLEESHKLRPTTLHLTTLGAQDSLNNNNGGFTSAPPSSWQETVLRSPAQEPLKELPAPLLPAEEERHEVQSLARPGCDCEGNQPPEPPASSGGASPSSDPGIEADLRSHSSGGHEGRRSSQELSSPGSDSEDAGGARLGRMISSISETELELSSDGGSSSGRSSHLTNSIEEASSPASEPEPEPEPLHEPPRRPAFLPVGQDDTNSEYESGSESEPDLSEDADSPWLLSNLVSRMISEGSSPIRCPGQCLSPAPRLPEEAASQANSVPQDCQDPEAGPHVELVDMDTLCGPPPPAPAAPRLGPAQPGPCLFLSNPTRDTITPLWATPGRTARPGRSCSAACSEEEEEDEEEDEEDEEDAEDSVVPPGSRTTGSTAPLDASLVYDAVKYTLVVDEHTQLELVSLRRCAGLGNDSEEDSSCEASEEEAGATLLGSDQVPEDASPDSPDLTFSKKFLNVFVNSTSRSSSTESFGLFSCVVNGEEREQTHRAVFRFIPRHPDELELDVDDPVLVEAEEDDFWFRGFNMRTGERGVFPAFYAHAVPGPAKDLLGSKRSPCWVDRFDVQFLGSVEVPCHQGNGILCAAMQKIATARKLTVHLRPPASCDLEISLRGVKLSLSGGGPEFQRCSHFFQMKNISFCGCHPRNSCYFGFITKHPLLSRFACHVFVSQESMRPVARSVGRAFLEYYQEHLAFACPTEDIYLE.

Disordered regions lie at residues 1 to 26 (MADR…PPQD), 44 to 354 (CGLG…ADSP), 367 to 438 (EGSS…PGPC), 452 to 504 (LWAT…GSTA), and 539 to 574 (GNDS…PDSP). The span at 77–105 (DFQEFEMIDDNEEEDDEEEEEEEEEEEDG) shows a compositional bias: acidic residues. Positions 111-278 (AGGGPGSQAL…RMISSISETE (168 aa)) are JNK-binding domain (JBD). The segment covering 142-172 (LHLTTLGAQDSLNNNNGGFTSAPPSSWQETV) has biased composition (polar residues). 2 stretches are compositionally biased toward low complexity: residues 176–190 (PAQE…PLLP) and 218–227 (ASSGGASPSS). Residues 233-249 (ADLRSHSSGGHEGRRSS) show a composition bias toward basic and acidic residues. The necessary for interaction with FGF13 stretch occupies residues 242 to 504 (GHEGRRSSQE…PGSRTTGSTA (263 aa)). 3 positions are modified to phosphoserine: Ser-257, Ser-304, and Ser-307. Over residues 271–307 (ISSISETELELSSDGGSSSGRSSHLTNSIEEASSPAS) the composition is skewed to low complexity. Residues 333 to 352 (TNSEYESGSESEPDLSEDAD) show a composition bias toward acidic residues. The span at 427-437 (APRLGPAQPGP) shows a compositional bias: low complexity. Acidic residues-rich tracts occupy residues 471–490 (SEEE…DAED) and 541–555 (DSEE…EEEA). Residues 610 to 671 (EREQTHRAVF…PAFYAHAVPG (62 aa)) form the SH3 domain. The region spanning 683–819 (PCWVDRFDVQ…FLEYYQEHLA (137 aa)) is the PID domain.

This sequence belongs to the JIP scaffold family. Forms homo- or heterooligomeric complexes. Binds specific components of the JNK signaling pathway namely JNK1, JNK2, JNK3, MAP2K7, MAP3K10, MAP3K11, MAP3K12 and MAPK13. Also binds the proline-rich domain-containing splice variant of apolipoprotein E receptor 2 (ApoER2). Binds the TPR motif-containing C-terminal of kinesin light chain. Binds the cytoplasmic tails of LRP1 and LRP2 (Megalin). Interacts with DCLK2. Interacts with FGF13; enables the interaction with MAPK13 and may regulate the MAPK8IP2 scaffolding activity. Interacts with TIAM1 and TIAM2. Interacts with SH3RF2. In terms of tissue distribution, highly expressed in brain. Expressed in all neurons. Also expressed in testis, primarily in the epididymal epidermis.

It localises to the cytoplasm. Functionally, the JNK-interacting protein (JIP) group of scaffold proteins selectively mediates JNK signaling by aggregating specific components of the MAPK cascade to form a functional JNK signaling module. JIP2 inhibits IL1 beta-induced apoptosis in insulin-secreting cells. The sequence is that of C-Jun-amino-terminal kinase-interacting protein 2 (Mapk8ip2) from Mus musculus (Mouse).